The sequence spans 403 residues: Stearoyl-[acyl-carrier-protein] 9-desaturase 4, chloroplastic (403 aa).

Residues 1–44 (MALLLNSTMTVAMKQNPATAVSFMQTTCLGSSFSPPRHLQVSCV) constitute a chloroplast transit peptide. Fe cation is bound by residues Glu-140, Glu-178, His-181, Glu-231, Glu-264, and His-267.

It belongs to the fatty acid desaturase type 2 family. Homodimer. Fe(2+) is required as a cofactor. In terms of tissue distribution, preferentially expressed in roots.

It localises to the plastid. It is found in the chloroplast. It carries out the reaction octadecanoyl-[ACP] + 2 reduced [2Fe-2S]-[ferredoxin] + O2 + 2 H(+) = (9Z)-octadecenoyl-[ACP] + 2 oxidized [2Fe-2S]-[ferredoxin] + 2 H2O. It functions in the pathway lipid metabolism; fatty acid metabolism. Functionally, converts stearoyl-ACP to oleoyl-ACP by introduction of a cis double bond between carbons 9 and 10 of the acyl chain. The polypeptide is Stearoyl-[acyl-carrier-protein] 9-desaturase 4, chloroplastic (S-ACP-DES4) (Arabidopsis thaliana (Mouse-ear cress)).